The primary structure comprises 443 residues: Tryptophan synthase beta chain 2, chloroplastic (443 aa).

The interval 1–32 (PGPPPPAPEGRRRRGRGRNAAGQAVAAEASPA) is disordered. Residues 1–45 (PGPPPPAPEGRRRRGRGRNAAGQAVAAEASPAAVEMGNGAAAPGL) constitute a chloroplast transit peptide. Over residues 18-32 (RNAAGQAVAAEASPA) the composition is skewed to low complexity. Lys138 is modified (N6-(pyridoxal phosphate)lysine).

Belongs to the TrpB family. Tetramer of two alpha and two beta chains. Pyridoxal 5'-phosphate serves as cofactor.

The protein localises to the plastid. Its subcellular location is the chloroplast. It catalyses the reaction (1S,2R)-1-C-(indol-3-yl)glycerol 3-phosphate + L-serine = D-glyceraldehyde 3-phosphate + L-tryptophan + H2O. It participates in amino-acid biosynthesis; L-tryptophan biosynthesis; L-tryptophan from chorismate: step 5/5. Functionally, the beta subunit is responsible for the synthesis of L-tryptophan from indole and L-serine. This Zea mays (Maize) protein is Tryptophan synthase beta chain 2, chloroplastic (TSB2).